We begin with the raw amino-acid sequence, 584 residues long: Long-chain-fatty-acid--AMP ligase FadD26 (584 aa).

It belongs to the ATP-dependent AMP-binding enzyme family.

It carries out the reaction holo-[(phenol)carboxyphthiodiolenone synthase] + a long-chain fatty acid + ATP = a long-chain fatty acyl-[(phenol)carboxyphthiodiolenone synthase] + AMP + diphosphate. The enzyme catalyses eicosanoate + holo-[(phenol)carboxyphthiodiolenone synthase] + ATP = icosanoyl-[(phenol)carboxyphthiodiolenone synthase] + AMP + diphosphate. It catalyses the reaction holo-[(phenol)carboxyphthiodiolenone synthase] + docosanoate + ATP = docosanoyl-[(phenol)carboxyphthiodiolenone synthase] + AMP + diphosphate. Its pathway is lipid metabolism; fatty acid biosynthesis. Catalyzes the activation of long-chain fatty acids as acyl-adenylates (acyl-AMP), which are then transferred to the multifunctional polyketide synthase PpsA for further chain extension. Catalyzes the adenylation of the long-chain fatty acids eicosanoate (C20) or docosanoate (C22), and potentially the very-long-chain fatty acid lignocerate (C24). Involved in the biosynthesis of phthiocerol dimycocerosate (DIM A) and phthiodiolone dimycocerosate (DIM B). The sequence is that of Long-chain-fatty-acid--AMP ligase FadD26 from Mycobacterium marinum (strain ATCC BAA-535 / M).